The sequence spans 136 residues: Large-conductance mechanosensitive channel (136 aa).

Over 1–16 (MGLLSEFKAFAVKGNV) the chain is Cytoplasmic. Residues 17 to 45 (VDMAVGIIIGAAFGKIVSSFVGDVIMPPI) form a helical membrane-spanning segment. Over 46 to 73 (GLLIGGVDFSDLAITLKAEGDVPAVVLA) the chain is Extracellular. The helical transmembrane segment at 74–93 (YRKFIQTVLNFVIVAFAIFM) threads the bilayer. The Cytoplasmic portion of the chain corresponds to 94-136 (GVKAINRLKREEAVAPSEPPVPSAEETLLTEIRDLLKAQQNKS).

The protein belongs to the MscL family. As to quaternary structure, homopentamer.

Its subcellular location is the cell inner membrane. Channel that opens in response to stretch forces in the membrane lipid bilayer. Forms a nonselective ion channel with a conductance of about 4 nanosiemens. May participate in the regulation of osmotic pressure changes within the cell. The polypeptide is Large-conductance mechanosensitive channel (Pseudomonas fluorescens).